The sequence spans 159 residues: Protein RseC (159 aa).

The Cytoplasmic segment spans residues 1–72; the sequence is MIKEWATVVS…QKVELGIAEG (72 aa). Residues 73-95 form a helical membrane-spanning segment; it reads SLLSSALLVYMSPLVGLFLIASL. Residues 96 to 98 are Periplasmic-facing; it reads FQL. The helical transmembrane segment at 99-121 threads the bilayer; it reads LFASDVAALCGAILGGIGGFLIA. Residues 122-159 lie on the Cytoplasmic side of the membrane; that stretch reads RGYSRKFAARAEWQPIILSVALPPGLVRFETSSEDASQ.

The protein belongs to the RseC family.

The protein localises to the cell inner membrane. May play a role in reduction of the SoxR iron-sulfur cluster. May work together with the RsxABCDGE complex. This is Protein RseC from Escherichia coli (strain K12).